Reading from the N-terminus, the 258-residue chain is Steroid 5-alpha-reductase DET2 (258 aa).

The next 6 membrane-spanning stretches (helical) occupy residues 8-28 (FHYC…SLYF), 49-69 (LAWF…FPSG), 77-97 (SFLL…LYPL), 109-129 (FPVS…YLQA), 144-164 (LFWW…WVNV), and 201-221 (IMEW…GFFL).

Belongs to the steroid 5-alpha reductase family. As to expression, accumulates in fibers (seed trichomes) during both their initiation and elongation phases. Also present in roots, hypocotyls, leaves, flowers and ovules, and barely in cotyledons.

The protein localises to the membrane. The catalysed reaction is a 3-oxo-5alpha-steroid + NADP(+) = a 3-oxo-Delta(4)-steroid + NADPH + H(+). Its pathway is plant hormone biosynthesis; brassinosteroid biosynthesis. Involved in a reduction step in the biosynthesis of the plant steroid, brassinolide (BL). Promotes cotton fibers (seed trichomes) initiation and elongation. The sequence is that of Steroid 5-alpha-reductase DET2 from Gossypium hirsutum (Upland cotton).